Consider the following 140-residue polypeptide: Sex-regulated protein janus-B (140 aa).

Arginine 42 serves as a coordination point for substrate. Histidine 69 (proton acceptor) is an active-site residue. A substrate-binding site is contributed by 110–112; it reads SRT.

The protein belongs to the janus family.

JanA and janB regulate somatic sex differentiation. This Drosophila simulans (Fruit fly) protein is Sex-regulated protein janus-B (janB).